The primary structure comprises 297 residues: UTP--glucose-1-phosphate uridylyltransferase (297 aa).

Belongs to the UDPGP type 2 family.

It carries out the reaction alpha-D-glucose 1-phosphate + UTP + H(+) = UDP-alpha-D-glucose + diphosphate. The protein operates within carbohydrate metabolism; nucleotide-sugar metabolism. Its pathway is bacterial outer membrane biogenesis; lipopolysaccharide biosynthesis. In terms of biological role, may play a role in stationary phase survival. This is UTP--glucose-1-phosphate uridylyltransferase (galF) from Salmonella typhimurium (strain LT2 / SGSC1412 / ATCC 700720).